The sequence spans 524 residues: 2-isopropylmalate synthase (524 aa).

Positions 12 to 274 constitute a Pyruvate carboxyltransferase domain; the sequence is VIIFDTTLRD…WNRIESKMLT (263 aa). Positions 21, 209, 211, and 245 each coordinate Mn(2+). A regulatory domain region spans residues 398–524; it reads RLKSLTVIAG…QDAPAVAVAG (127 aa).

Belongs to the alpha-IPM synthase/homocitrate synthase family. LeuA type 1 subfamily. As to quaternary structure, homodimer. It depends on Mn(2+) as a cofactor.

The protein localises to the cytoplasm. The enzyme catalyses 3-methyl-2-oxobutanoate + acetyl-CoA + H2O = (2S)-2-isopropylmalate + CoA + H(+). It functions in the pathway amino-acid biosynthesis; L-leucine biosynthesis; L-leucine from 3-methyl-2-oxobutanoate: step 1/4. Its function is as follows. Catalyzes the condensation of the acetyl group of acetyl-CoA with 3-methyl-2-oxobutanoate (2-ketoisovalerate) to form 3-carboxy-3-hydroxy-4-methylpentanoate (2-isopropylmalate). In Rhodopseudomonas palustris (strain BisB5), this protein is 2-isopropylmalate synthase.